Reading from the N-terminus, the 128-residue chain is Lymphocyte antigen 6D (128 aa).

An N-terminal signal peptide occupies residues methionine 1–alanine 20. The UPAR/Ly6 domain maps to leucine 21–serine 108. Disulfide bonds link cysteine 23–cysteine 45, cysteine 26–cysteine 32, cysteine 38–cysteine 63, cysteine 67–cysteine 86, and cysteine 87–cysteine 92. Residue serine 98 is the site of GPI-anchor amidated serine attachment. A propeptide spans tryptophan 99–leucine 128 (removed in mature form).

The protein resides in the cell membrane. In terms of biological role, may act as a specification marker at earliest stage specification of lymphocytes between B- and T-cell development. Marks the earliest stage of B-cell specification. This chain is Lymphocyte antigen 6D (LY6D), found in Bos taurus (Bovine).